The following is a 313-amino-acid chain: tRNA(Ile)-lysidine synthase (313 aa).

37–42 (SGGPDS) lines the ATP pocket.

This sequence belongs to the tRNA(Ile)-lysidine synthase family.

Its subcellular location is the cytoplasm. The enzyme catalyses cytidine(34) in tRNA(Ile2) + L-lysine + ATP = lysidine(34) in tRNA(Ile2) + AMP + diphosphate + H(+). Functionally, ligates lysine onto the cytidine present at position 34 of the AUA codon-specific tRNA(Ile) that contains the anticodon CAU, in an ATP-dependent manner. Cytidine is converted to lysidine, thus changing the amino acid specificity of the tRNA from methionine to isoleucine. The sequence is that of tRNA(Ile)-lysidine synthase from Corynebacterium efficiens (strain DSM 44549 / YS-314 / AJ 12310 / JCM 11189 / NBRC 100395).